Consider the following 632-residue polypeptide: tRNA uridine 5-carboxymethylaminomethyl modification enzyme MnmG (632 aa).

13–18 (GGGHAG) lines the FAD pocket. 273 to 287 (GPRYCPSIEDKIHRF) serves as a coordination point for NAD(+).

It belongs to the MnmG family. As to quaternary structure, homodimer. Heterotetramer of two MnmE and two MnmG subunits. FAD serves as cofactor.

It localises to the cytoplasm. In terms of biological role, NAD-binding protein involved in the addition of a carboxymethylaminomethyl (cmnm) group at the wobble position (U34) of certain tRNAs, forming tRNA-cmnm(5)s(2)U34. This is tRNA uridine 5-carboxymethylaminomethyl modification enzyme MnmG from Psychrobacter cryohalolentis (strain ATCC BAA-1226 / DSM 17306 / VKM B-2378 / K5).